We begin with the raw amino-acid sequence, 70 residues long: SPbeta prophage-derived uncharacterized HTH-type transcriptional regulator YopO (70 aa).

The HTH cro/C1-type domain occupies 5–59 (IKQLMVKRGITIEELSRETMIDMQTLNKIIEMPDESDVTTIKLIALVLNVSIDEL). Positions 16-35 (IEELSRETMIDMQTLNKIIE) form a DNA-binding region, H-T-H motif.

This chain is SPbeta prophage-derived uncharacterized HTH-type transcriptional regulator YopO (yopO), found in Bacillus subtilis (strain 168).